Consider the following 202-residue polypeptide: Holliday junction resolvase RecU (202 aa).

Mg(2+) is bound by residues Thr-85, Asp-87, Glu-100, and Gln-119.

Belongs to the RecU family. It depends on Mg(2+) as a cofactor.

The protein localises to the cytoplasm. The enzyme catalyses Endonucleolytic cleavage at a junction such as a reciprocal single-stranded crossover between two homologous DNA duplexes (Holliday junction).. In terms of biological role, endonuclease that resolves Holliday junction intermediates in genetic recombination. Cleaves mobile four-strand junctions by introducing symmetrical nicks in paired strands. Promotes annealing of linear ssDNA with homologous dsDNA. Required for DNA repair, homologous recombination and chromosome segregation. This Streptococcus equi subsp. equi (strain 4047) protein is Holliday junction resolvase RecU.